A 420-amino-acid polypeptide reads, in one-letter code: Gamma-glutamyl phosphate reductase (420 aa).

It belongs to the gamma-glutamyl phosphate reductase family.

It is found in the cytoplasm. The catalysed reaction is L-glutamate 5-semialdehyde + phosphate + NADP(+) = L-glutamyl 5-phosphate + NADPH + H(+). The protein operates within amino-acid biosynthesis; L-proline biosynthesis; L-glutamate 5-semialdehyde from L-glutamate: step 2/2. Catalyzes the NADPH-dependent reduction of L-glutamate 5-phosphate into L-glutamate 5-semialdehyde and phosphate. The product spontaneously undergoes cyclization to form 1-pyrroline-5-carboxylate. The sequence is that of Gamma-glutamyl phosphate reductase from Chlorobium luteolum (strain DSM 273 / BCRC 81028 / 2530) (Pelodictyon luteolum).